The sequence spans 97 residues: Large ribosomal subunit protein bL25 (97 aa).

The protein belongs to the bacterial ribosomal protein bL25 family. In terms of assembly, part of the 50S ribosomal subunit; part of the 5S rRNA/L5/L18/L25 subcomplex. Contacts the 5S rRNA. Binds to the 5S rRNA independently of L5 and L18.

In terms of biological role, this is one of the proteins that binds to the 5S RNA in the ribosome where it forms part of the central protuberance. The sequence is that of Large ribosomal subunit protein bL25 from Buchnera aphidicola subsp. Baizongia pistaciae (strain Bp).